The following is a 123-amino-acid chain: Small ribosomal subunit protein uS12 (123 aa).

A 3-methylthioaspartic acid modification is found at Asp-89.

The protein belongs to the universal ribosomal protein uS12 family. In terms of assembly, part of the 30S ribosomal subunit. Contacts proteins S8 and S17. May interact with IF1 in the 30S initiation complex.

Functionally, with S4 and S5 plays an important role in translational accuracy. Its function is as follows. Interacts with and stabilizes bases of the 16S rRNA that are involved in tRNA selection in the A site and with the mRNA backbone. Located at the interface of the 30S and 50S subunits, it traverses the body of the 30S subunit contacting proteins on the other side and probably holding the rRNA structure together. The combined cluster of proteins S8, S12 and S17 appears to hold together the shoulder and platform of the 30S subunit. This Nitrobacter winogradskyi (strain ATCC 25391 / DSM 10237 / CIP 104748 / NCIMB 11846 / Nb-255) protein is Small ribosomal subunit protein uS12.